The primary structure comprises 197 residues: Ribonuclease HII (197 aa).

The 189-residue stretch at 9 to 197 folds into the RNase H type-2 domain; that stretch reads KLIAGVDEVG…APVKKALEQF (189 aa). Residues D15, E16, and D107 each coordinate a divalent metal cation.

The protein belongs to the RNase HII family. Mn(2+) is required as a cofactor. It depends on Mg(2+) as a cofactor.

The protein localises to the cytoplasm. It catalyses the reaction Endonucleolytic cleavage to 5'-phosphomonoester.. Endonuclease that specifically degrades the RNA of RNA-DNA hybrids. The polypeptide is Ribonuclease HII (Haemophilus influenzae (strain PittEE)).